The chain runs to 1058 residues: Carbamoyl phosphate synthase large chain (1058 aa).

Positions 1–401 are carboxyphosphate synthetic domain; the sequence is MPKRTDIQKI…SLLKACRSLE (401 aa). 12 residues coordinate ATP: R129, R169, G175, G176, R208, I210, E215, G241, I242, H243, Q284, and E298. The ATP-grasp 1 domain occupies 133–327; that stretch reads KQLMEELEQP…IAKLAAKIAV (195 aa). Mg(2+) is bound by residues Q284, E298, and N300. Mn(2+)-binding residues include Q284, E298, and N300. The oligomerization domain stretch occupies residues 402–546; sequence IGVHHNEIPE…YSTYGWENES (145 aa). The carbamoyl phosphate synthetic domain stretch occupies residues 547 to 929; it reads IRSDKESVLV…ALYKAFEASY (383 aa). An ATP-grasp 2 domain is found at 671 to 861; that stretch reads EQALKELDIP…MAQVATKLIL (191 aa). Positions 707, 746, 748, 752, 777, 778, 779, 780, 820, and 832 each coordinate ATP. Mg(2+) is bound by residues Q820, E832, and N834. Residues Q820, E832, and N834 each contribute to the Mn(2+) site. One can recognise an MGS-like domain in the interval 930-1058; it reads LHLPTFGNVV…ESRSFVTEAI (129 aa). The interval 930-1058 is allosteric domain; it reads LHLPTFGNVV…ESRSFVTEAI (129 aa).

It belongs to the CarB family. Composed of two chains; the small (or glutamine) chain promotes the hydrolysis of glutamine to ammonia, which is used by the large (or ammonia) chain to synthesize carbamoyl phosphate. Tetramer of heterodimers (alpha,beta)4. Requires Mg(2+) as cofactor. The cofactor is Mn(2+).

The enzyme catalyses hydrogencarbonate + L-glutamine + 2 ATP + H2O = carbamoyl phosphate + L-glutamate + 2 ADP + phosphate + 2 H(+). The catalysed reaction is hydrogencarbonate + NH4(+) + 2 ATP = carbamoyl phosphate + 2 ADP + phosphate + 2 H(+). It participates in amino-acid biosynthesis; L-arginine biosynthesis; carbamoyl phosphate from bicarbonate: step 1/1. The protein operates within pyrimidine metabolism; UMP biosynthesis via de novo pathway; (S)-dihydroorotate from bicarbonate: step 1/3. Large subunit of the glutamine-dependent carbamoyl phosphate synthetase (CPSase). CPSase catalyzes the formation of carbamoyl phosphate from the ammonia moiety of glutamine, carbonate, and phosphate donated by ATP, constituting the first step of 2 biosynthetic pathways, one leading to arginine and/or urea and the other to pyrimidine nucleotides. The large subunit (synthetase) binds the substrates ammonia (free or transferred from glutamine from the small subunit), hydrogencarbonate and ATP and carries out an ATP-coupled ligase reaction, activating hydrogencarbonate by forming carboxy phosphate which reacts with ammonia to form carbamoyl phosphate. In Streptococcus pneumoniae serotype 19F (strain G54), this protein is Carbamoyl phosphate synthase large chain.